The sequence spans 233 residues: 2-phytyl-1,4-naphtoquinone methyltransferase (233 aa).

This sequence belongs to the class I-like SAM-binding methyltransferase superfamily. MenG/UbiE family.

The enzyme catalyses demethylphylloquinol + S-adenosyl-L-methionine = phylloquinol + S-adenosyl-L-homocysteine + H(+). It participates in cofactor biosynthesis; phylloquinone biosynthesis. Functionally, methyltransferase required for the conversion of 2-phytyl-1,4-beta-naphthoquinol to phylloquinol. The chain is 2-phytyl-1,4-naphtoquinone methyltransferase from Synechococcus elongatus (strain ATCC 33912 / PCC 7942 / FACHB-805) (Anacystis nidulans R2).